The chain runs to 357 residues: Probable butyrate kinase (357 aa).

It belongs to the acetokinase family.

Its subcellular location is the cytoplasm. It carries out the reaction butanoate + ATP = butanoyl phosphate + ADP. The protein is Probable butyrate kinase of Thermotoga petrophila (strain ATCC BAA-488 / DSM 13995 / JCM 10881 / RKU-1).